The primary structure comprises 572 residues: Flagellin B (572 aa).

It belongs to the bacterial flagellin family. Heteromer of flaA and flaB.

Its subcellular location is the secreted. The protein resides in the bacterial flagellum. In terms of biological role, flagellin is the subunit protein which polymerizes to form the filaments of bacterial flagella. The chain is Flagellin B (flaB) from Campylobacter jejuni subsp. jejuni serotype O:2 (strain ATCC 700819 / NCTC 11168).